Consider the following 858-residue polypeptide: Protein translocase subunit SecA (858 aa).

Residues glutamine 85, 103–107, and aspartate 511 each bind ATP; that span reads GEGKT. Positions 840, 842, 851, and 852 each coordinate Zn(2+).

Belongs to the SecA family. Monomer and homodimer. Part of the essential Sec protein translocation apparatus which comprises SecA, SecYEG and auxiliary proteins SecDF. Other proteins may also be involved. The cofactor is Zn(2+).

Its subcellular location is the cell membrane. It is found in the cytoplasm. The catalysed reaction is ATP + H2O + cellular proteinSide 1 = ADP + phosphate + cellular proteinSide 2.. Part of the Sec protein translocase complex. Interacts with the SecYEG preprotein conducting channel. Has a central role in coupling the hydrolysis of ATP to the transfer of proteins into and across the cell membrane, serving as an ATP-driven molecular motor driving the stepwise translocation of polypeptide chains across the membrane. This chain is Protein translocase subunit SecA, found in Lachnoclostridium phytofermentans (strain ATCC 700394 / DSM 18823 / ISDg) (Clostridium phytofermentans).